Here is a 287-residue protein sequence, read N- to C-terminus: NADH-cytochrome b5 reductase 1 (287 aa).

The chain crosses the membrane as a helical span at residues 5–25; sequence FEALVTALVLAVSFIFIYGKF. Residues 41–145 enclose the FAD-binding FR-type domain; the sequence is KDWQEFSLLT…RGPKGFYHYE (105 aa). FAD-binding positions include 125–142 and 151–183; these read AELAIGDRIKVRGPKGFY and EIGMIAGGTGISPMYQIIRAIFSNPRDKTRVCL.

Belongs to the flavoprotein pyridine nucleotide cytochrome reductase family. As to quaternary structure, monomer. Component of the 2-(3-amino-3-carboxypropyl)histidine synthase complex composed of DPH1, DPH2, DPH3 and a NADH-dependent reductase, predominantly CBR1. The cofactor is FAD.

Its subcellular location is the mitochondrion outer membrane. It carries out the reaction 2 Fe(III)-[cytochrome b5] + NADH = 2 Fe(II)-[cytochrome b5] + NAD(+) + H(+). The enzyme catalyses 2 Fe(3+)-[Dph3] + NADH = 2 Fe(2+)-[Dph3] + NAD(+) + H(+). It participates in protein modification; peptidyl-diphthamide biosynthesis. Its function is as follows. NADH-dependent reductase for DPH3 and cytochrome b5. Required for the first step of diphthamide biosynthesis, a post-translational modification of histidine which occurs in elongation factor 2. DPH1 and DPH2 transfer a 3-amino-3-carboxypropyl (ACP) group from S-adenosyl-L-methionine (SAM) to a histidine residue, the reaction is assisted by a reduction system comprising DPH3 and a NADH-dependent reductase, predominantly CBR1. By reducing DPH3, also involved in the formation of the tRNA wobble base modification mcm5s 2U (5-methoxycarbonylmethyl-2-thiouridine), mediated by the elongator complex. The cytochrome b5/NADH cytochrome b5 reductase electron transfer system supports the catalytic activity of several sterol biosynthetic enzymes. The chain is NADH-cytochrome b5 reductase 1 (CBR1) from Eremothecium gossypii (strain ATCC 10895 / CBS 109.51 / FGSC 9923 / NRRL Y-1056) (Yeast).